We begin with the raw amino-acid sequence, 513 residues long: Putative BTB/POZ domain-containing protein L55 (513 aa).

The 73-residue stretch at 11–83 (SPIKIILQDI…FHGYKMEISD (73 aa)) folds into the BTB domain.

This sequence belongs to the mimivirus BTB/WD family.

The sequence is that of Putative BTB/POZ domain-containing protein L55 from Acanthamoeba polyphaga (Amoeba).